Here is a 389-residue protein sequence, read N- to C-terminus: Phosphoglycerate kinase (389 aa).

Substrate contacts are provided by residues 19-21, R34, 57-60, R117, and R150; these read DYN and HLGR. Residues K200, G288, E319, and 347-350 each bind ATP; that span reads GGDS.

This sequence belongs to the phosphoglycerate kinase family. As to quaternary structure, monomer.

The protein resides in the cytoplasm. The enzyme catalyses (2R)-3-phosphoglycerate + ATP = (2R)-3-phospho-glyceroyl phosphate + ADP. Its pathway is carbohydrate degradation; glycolysis; pyruvate from D-glyceraldehyde 3-phosphate: step 2/5. The polypeptide is Phosphoglycerate kinase (Deinococcus geothermalis (strain DSM 11300 / CIP 105573 / AG-3a)).